A 401-amino-acid chain; its full sequence is tRNA-specific 2-thiouridylase MnmA (401 aa).

Residues 13-20 (GLSGGVDS) and Met-39 contribute to the ATP site. Residues 99 to 101 (NPD) are interaction with target base in tRNA. The Nucleophile role is filled by Cys-104. Cys-104 and Cys-202 are oxidised to a cystine. Residue Gly-128 participates in ATP binding. Residues 152 to 154 (KDQ) are interaction with tRNA. The Cysteine persulfide intermediate role is filled by Cys-202. The segment at 329–330 (RY) is interaction with tRNA.

This sequence belongs to the MnmA/TRMU family.

It is found in the cytoplasm. It catalyses the reaction S-sulfanyl-L-cysteinyl-[protein] + uridine(34) in tRNA + AH2 + ATP = 2-thiouridine(34) in tRNA + L-cysteinyl-[protein] + A + AMP + diphosphate + H(+). Its function is as follows. Catalyzes the 2-thiolation of uridine at the wobble position (U34) of tRNA, leading to the formation of s(2)U34. The protein is tRNA-specific 2-thiouridylase MnmA of Polaromonas sp. (strain JS666 / ATCC BAA-500).